An 88-amino-acid chain; its full sequence is Small ribosomal subunit protein uS15 (88 aa).

The interval 1–23 (MIASSVKAEVVKSNARSANDTGS) is disordered. The span at 14–23 (NARSANDTGS) shows a compositional bias: polar residues.

The protein belongs to the universal ribosomal protein uS15 family. Part of the 30S ribosomal subunit. Forms a bridge to the 50S subunit in the 70S ribosome, contacting the 23S rRNA.

Functionally, one of the primary rRNA binding proteins, it binds directly to 16S rRNA where it helps nucleate assembly of the platform of the 30S subunit by binding and bridging several RNA helices of the 16S rRNA. Forms an intersubunit bridge (bridge B4) with the 23S rRNA of the 50S subunit in the ribosome. The polypeptide is Small ribosomal subunit protein uS15 (Delftia acidovorans (strain DSM 14801 / SPH-1)).